A 237-amino-acid polypeptide reads, in one-letter code: Ubiquitin-conjugating enzyme E2 34 (237 aa).

Residues 5-162 (ACIKRLQKEY…FPEYVEKYNQ (158 aa)) form the UBC core domain. Cys-87 acts as the Glycyl thioester intermediate in catalysis. The disordered stretch occupies residues 168 to 207 (QATTQLTTPESPQKSDTKVESEKTIDPTKGDSEGGLKERK). Residues 180-204 (QKSDTKVESEKTIDPTKGDSEGGLK) show a composition bias toward basic and acidic residues. Residues 214 to 234 (LPAWIILLLVSVFGVVMALPL) form a helical membrane-spanning segment.

The protein belongs to the ubiquitin-conjugating enzyme family.

It localises to the membrane. It catalyses the reaction S-ubiquitinyl-[E1 ubiquitin-activating enzyme]-L-cysteine + [E2 ubiquitin-conjugating enzyme]-L-cysteine = [E1 ubiquitin-activating enzyme]-L-cysteine + S-ubiquitinyl-[E2 ubiquitin-conjugating enzyme]-L-cysteine.. Its pathway is protein modification; protein ubiquitination. Its function is as follows. Accepts the ubiquitin from the E1 complex and catalyzes its covalent attachment to other proteins. The protein is Ubiquitin-conjugating enzyme E2 34 (UBC34) of Arabidopsis thaliana (Mouse-ear cress).